Here is a 273-residue protein sequence, read N- to C-terminus: WAP four-disulfide core domain protein 8 (273 aa).

The helical transmembrane segment at 45 to 65 (LAHSWWSGALLLLLLFLFLSL) threads the bilayer. The 48-residue stretch at 76-123 (IKQKVGECPRQRLECRNESLSSCKTDFNCKAHFKCCQFACGRKCMDPY) folds into the WAP 1 domain. 15 disulfides stabilise this stretch: cysteine 83-cysteine 111, cysteine 90-cysteine 115, cysteine 98-cysteine 110, cysteine 104-cysteine 119, cysteine 127-cysteine 177, cysteine 136-cysteine 160, cysteine 152-cysteine 173, cysteine 186-cysteine 214, cysteine 197-cysteine 218, cysteine 201-cysteine 213, cysteine 207-cysteine 222, cysteine 233-cysteine 261, cysteine 240-cysteine 264, cysteine 248-cysteine 260, and cysteine 254-cysteine 268. The 51-residue stretch at 127–177 (CMLPSDKGNCQDILTRWYFDSQKHQCRAFLYSGCRGNANNFLTKTDCRNAC) folds into the BPTI/Kunitz inhibitor domain. 2 consecutive WAP domains span residues 179-226 (FVEK…ARVW) and 228-272 (VKTG…LKPR).

It localises to the membrane. In Mus musculus (Mouse), this protein is WAP four-disulfide core domain protein 8 (Wfdc8).